The sequence spans 339 residues: UDP-N-acetylglucosamine--N-acetylmuramyl-(pentapeptide) pyrophosphoryl-undecaprenol N-acetylglucosamine transferase (339 aa).

Residues 11–13, N127, R170, S188, I235, and Q280 each bind UDP-N-acetyl-alpha-D-glucosamine; that span reads TGG.

It belongs to the glycosyltransferase 28 family. MurG subfamily.

It localises to the cell inner membrane. It catalyses the reaction di-trans,octa-cis-undecaprenyl diphospho-N-acetyl-alpha-D-muramoyl-L-alanyl-D-glutamyl-meso-2,6-diaminopimeloyl-D-alanyl-D-alanine + UDP-N-acetyl-alpha-D-glucosamine = di-trans,octa-cis-undecaprenyl diphospho-[N-acetyl-alpha-D-glucosaminyl-(1-&gt;4)]-N-acetyl-alpha-D-muramoyl-L-alanyl-D-glutamyl-meso-2,6-diaminopimeloyl-D-alanyl-D-alanine + UDP + H(+). The protein operates within cell wall biogenesis; peptidoglycan biosynthesis. In terms of biological role, cell wall formation. Catalyzes the transfer of a GlcNAc subunit on undecaprenyl-pyrophosphoryl-MurNAc-pentapeptide (lipid intermediate I) to form undecaprenyl-pyrophosphoryl-MurNAc-(pentapeptide)GlcNAc (lipid intermediate II). The chain is UDP-N-acetylglucosamine--N-acetylmuramyl-(pentapeptide) pyrophosphoryl-undecaprenol N-acetylglucosamine transferase from Thermotoga petrophila (strain ATCC BAA-488 / DSM 13995 / JCM 10881 / RKU-1).